The primary structure comprises 264 residues: Probable transcriptional regulatory protein PPA1157 (264 aa).

The protein belongs to the TACO1 family.

The protein resides in the cytoplasm. This chain is Probable transcriptional regulatory protein PPA1157, found in Cutibacterium acnes (strain DSM 16379 / KPA171202) (Propionibacterium acnes).